Consider the following 326-residue polypeptide: MQTALLKPKIIAVEPLGDHHAKVVMEPFERGYGHTLGNALRRVLLSSMVGYAPTEVTIAGVVHEYSTIDGVQEDVVNLLLNLKGVVFKLHNRDEVTVSLRKDGEGVVTAADIELPHDVEIINPGHVIAHLSAGGKLDMQIKVEQGRGYVPGNVRKFGDEASKVIGRIVLDASFSPVRRVSYAVESARVEQRTDLDKLVMNIETDGVISPEEAIRQSARILVDQLSVFAALEGTESAAEAASSRAPQIDPILLRPVDDLELTVRSANCLKAENIYYIGDLIQRTENELLKTPNLGRKSLNEIKEVLASRGLTLGMKLENWPPAGLEK.

Residues Met-1–Glu-231 form an alpha N-terminal domain (alpha-NTD) region. Residues Ile-247–Lys-326 are alpha C-terminal domain (alpha-CTD).

The protein belongs to the RNA polymerase alpha chain family. As to quaternary structure, homodimer. The RNAP catalytic core consists of 2 alpha, 1 beta, 1 beta' and 1 omega subunit. When a sigma factor is associated with the core the holoenzyme is formed, which can initiate transcription.

The enzyme catalyses RNA(n) + a ribonucleoside 5'-triphosphate = RNA(n+1) + diphosphate. Its function is as follows. DNA-dependent RNA polymerase catalyzes the transcription of DNA into RNA using the four ribonucleoside triphosphates as substrates. In Cupriavidus metallidurans (strain ATCC 43123 / DSM 2839 / NBRC 102507 / CH34) (Ralstonia metallidurans), this protein is DNA-directed RNA polymerase subunit alpha.